The following is a 383-amino-acid chain: Acetylornithine deacetylase (383 aa).

His-80 is a binding site for Zn(2+). Residue Asp-82 is part of the active site. Asp-112 contributes to the Zn(2+) binding site. The active site involves Glu-144. Zn(2+) contacts are provided by Glu-145, Glu-169, and His-355.

Belongs to the peptidase M20A family. ArgE subfamily. As to quaternary structure, homodimer. The cofactor is Zn(2+). Co(2+) is required as a cofactor. Requires glutathione as cofactor.

The protein resides in the cytoplasm. It carries out the reaction N(2)-acetyl-L-ornithine + H2O = L-ornithine + acetate. It participates in amino-acid biosynthesis; L-arginine biosynthesis; L-ornithine from N(2)-acetyl-L-ornithine (linear): step 1/1. Catalyzes the hydrolysis of the amide bond of N(2)-acetylated L-amino acids. Cleaves the acetyl group from N-acetyl-L-ornithine to form L-ornithine, an intermediate in L-arginine biosynthesis pathway, and a branchpoint in the synthesis of polyamines. The protein is Acetylornithine deacetylase of Escherichia coli O7:K1 (strain IAI39 / ExPEC).